Here is a 549-residue protein sequence, read N- to C-terminus: MKLERVSSNGSFKRGRDIQSLESPCTRPLKKMSPSPSFTSLKMEKPFKDIVRKYGGHLHQSSYNPGSSKVELVRPDLSLKTDQSFLQSSVQTTPNKKSCNEYLSTPEATPLKNTATENAWATSRVVSASSLSIVTPTEIKNILVDEFSELKLGQPLTAQHQRSHAVFEIPEIVENIIKMIVSLESANIPKERPCLRRNPQSYEHSLLMYKDEERAKKAWSAAQQLRDPPLVGHKEKKQGALFSCMMVNRLWLNVTRPFLFKSLHFKSVHNFKEFLRTSQETTQVMRPSHFILHKLHQVTQPDIERLSRMECQNLKWLEFYVCPRITPPLSWFDNLHKLEKLIIPGNKNIDDNFLLRLSQSIPNLKHLVLRACDNVSDSGVVCIALNCPKLKTFNIGRHRRGNLITSVSLVALGKYTQVETVGFAGCDVDDAGIWEFARLNGKNVERLSLNSCRLLTDYSLPILFALNSFPNLAVLEIRNLDKITDVRHFVKYNLWKKSLDAPILIEACERITKLIDQEENRVKRINSLVALKDMTAWVNADDEIENNVD.

The segment covering 1–11 (MKLERVSSNGS) has biased composition (polar residues). A disordered region spans residues 1 to 39 (MKLERVSSNGSFKRGRDIQSLESPCTRPLKKMSPSPSFT).

This sequence belongs to the AMN1 family. As to quaternary structure, interacts with TEM1.

Its subcellular location is the cytoplasm. The protein localises to the nucleus. Its function is as follows. Negative regulator of the mitotic exit network (MEN), required for multiple cell cycle checkpoints. Acts in the daughter cell to inhibit the mitotic exit pathway once MEN has executed its function. Through its binding ability to TEM1, interferes with the TEM1-CDC5 association, required for CDC5 kinase activation and MEN activation. Required for daughter cell separation and chromosome stability. Involved in copper sensitivity. The polypeptide is Antagonist of mitotic exit network protein 1 (AMN1) (Saccharomyces cerevisiae (strain ATCC 204508 / S288c) (Baker's yeast)).